We begin with the raw amino-acid sequence, 661 residues long: Transketolase (661 aa).

His28 serves as a coordination point for substrate. Thiamine diphosphate is bound by residues His68 and 116 to 118; that span reads GPL. Residue Glu157 coordinates Mg(2+). Gly158 and Asn187 together coordinate thiamine diphosphate. Residues Asn187 and Ile189 each contribute to the Mg(2+) site. Substrate contacts are provided by His261 and Arg358. Residue His261 participates in thiamine diphosphate binding. The active-site Proton donor is the Glu412. Phe438 is a binding site for thiamine diphosphate. Positions 462, 470, and 521 each coordinate substrate.

This sequence belongs to the transketolase family. As to quaternary structure, homodimer. Mg(2+) serves as cofactor. The cofactor is Ca(2+). Requires Mn(2+) as cofactor. Co(2+) is required as a cofactor. It depends on thiamine diphosphate as a cofactor.

The catalysed reaction is D-sedoheptulose 7-phosphate + D-glyceraldehyde 3-phosphate = aldehydo-D-ribose 5-phosphate + D-xylulose 5-phosphate. In terms of biological role, catalyzes the transfer of a two-carbon ketol group from a ketose donor to an aldose acceptor, via a covalent intermediate with the cofactor thiamine pyrophosphate. The protein is Transketolase (tkt) of Treponema pallidum (strain Nichols).